A 337-amino-acid polypeptide reads, in one-letter code: Protein hairy (337 aa).

The interaction with Topors stretch occupies residues Lys-29–Asn-48. A bHLH domain is found at Asp-31–Leu-88. An Orange domain is found at Phe-107–Leu-136. Disordered stretches follow at residues Glu-146–Gly-178 and Met-259–Arg-311. Residues Thr-263–Pro-301 are compositionally biased toward low complexity. The short motif at Trp-334–Trp-337 is the WRPW motif element.

In terms of assembly, transcription repression requires formation of a complex with a corepressor protein (Groucho). Interacts with gro (via WPRW motif) and Topors. Post-translationally, ubiquitinated by Topors.

It localises to the nucleus. Pair-rule protein that regulates embryonic segmentation and adult bristle patterning. Transcriptional repressor of genes that require a bHLH protein for their transcription (e.g. ftz). The chain is Protein hairy from Drosophila melanogaster (Fruit fly).